Consider the following 300-residue polypeptide: Ribosomal RNA small subunit methyltransferase H (300 aa).

Residues 35-37 (GGH), aspartate 55, phenylalanine 82, aspartate 100, and glutamine 107 contribute to the S-adenosyl-L-methionine site.

This sequence belongs to the methyltransferase superfamily. RsmH family.

The protein localises to the cytoplasm. It catalyses the reaction cytidine(1402) in 16S rRNA + S-adenosyl-L-methionine = N(4)-methylcytidine(1402) in 16S rRNA + S-adenosyl-L-homocysteine + H(+). In terms of biological role, specifically methylates the N4 position of cytidine in position 1402 (C1402) of 16S rRNA. The polypeptide is Ribosomal RNA small subunit methyltransferase H (Chlamydia trachomatis serovar A (strain ATCC VR-571B / DSM 19440 / HAR-13)).